Here is a 114-residue protein sequence, read N- to C-terminus: Nucleoid-associated protein NT01CX_0824 (114 aa).

It belongs to the YbaB/EbfC family. As to quaternary structure, homodimer.

The protein localises to the cytoplasm. The protein resides in the nucleoid. Its function is as follows. Binds to DNA and alters its conformation. May be involved in regulation of gene expression, nucleoid organization and DNA protection. The polypeptide is Nucleoid-associated protein NT01CX_0824 (Clostridium novyi (strain NT)).